The following is a 556-amino-acid chain: Dihydroxy-acid dehydratase (556 aa).

Mg(2+) is bound at residue aspartate 81. [2Fe-2S] cluster is bound at residue cysteine 122. The Mg(2+) site is built by aspartate 123 and lysine 124. Lysine 124 is modified (N6-carboxylysine). Cysteine 196 lines the [2Fe-2S] cluster pocket. Mg(2+) is bound at residue glutamate 444. Residue serine 470 is the Proton acceptor of the active site.

Belongs to the IlvD/Edd family. In terms of assembly, homodimer. [2Fe-2S] cluster serves as cofactor. The cofactor is Mg(2+).

The enzyme catalyses (2R)-2,3-dihydroxy-3-methylbutanoate = 3-methyl-2-oxobutanoate + H2O. It carries out the reaction (2R,3R)-2,3-dihydroxy-3-methylpentanoate = (S)-3-methyl-2-oxopentanoate + H2O. It functions in the pathway amino-acid biosynthesis; L-isoleucine biosynthesis; L-isoleucine from 2-oxobutanoate: step 3/4. It participates in amino-acid biosynthesis; L-valine biosynthesis; L-valine from pyruvate: step 3/4. Functionally, functions in the biosynthesis of branched-chain amino acids. Catalyzes the dehydration of (2R,3R)-2,3-dihydroxy-3-methylpentanoate (2,3-dihydroxy-3-methylvalerate) into 2-oxo-3-methylpentanoate (2-oxo-3-methylvalerate) and of (2R)-2,3-dihydroxy-3-methylbutanoate (2,3-dihydroxyisovalerate) into 2-oxo-3-methylbutanoate (2-oxoisovalerate), the penultimate precursor to L-isoleucine and L-valine, respectively. The chain is Dihydroxy-acid dehydratase from Syntrophotalea carbinolica (strain DSM 2380 / NBRC 103641 / GraBd1) (Pelobacter carbinolicus).